The primary structure comprises 59 residues: Cecropin-C (59 aa).

The first 23 residues, 1 to 23 (MNFKLIFLVALVLMAAFLGQTEG), serve as a signal peptide directing secretion. V58 bears the Valine amide mark.

The protein belongs to the cecropin family.

The protein localises to the secreted. Its function is as follows. Cecropins have lytic and antibacterial activity against several Gram-positive and Gram-negative bacteria. The sequence is that of Cecropin-C (CecC) from Anopheles gambiae (African malaria mosquito).